We begin with the raw amino-acid sequence, 275 residues long: uncharacterized protein (275 aa).

6 consecutive transmembrane segments (helical) span residues 25-45 (LGYFAFGGVFILLGVLAFMTA), 70-90 (LLFFIGIGLIGYVIWMVLSAI), 107-127 (IGNFFSAAVYTSIAWNALRFV), 149-169 (FGQWLTGLTGAGFIVFAIVQF), 203-223 (IARAIIFSAIGYFLIKTAMTA), and 247-267 (ILSILALGLILYGMYAIMKGI).

The protein localises to the cell membrane. This is an uncharacterized protein from Bacillus subtilis (strain 168).